The following is a 259-amino-acid chain: Putative zinc metalloprotease Rip2 (259 aa).

2 helical membrane passes run P14–G34 and P39–L59. H60 is a binding site for Zn(2+). E61 is an active-site residue. H64 provides a ligand contact to Zn(2+). The next 4 membrane-spanning stretches (helical) occupy residues G97–V117, T128–A148, I156–V176, and L215–F235.

This sequence belongs to the peptidase M50B family. It depends on Zn(2+) as a cofactor.

It localises to the cell membrane. The polypeptide is Putative zinc metalloprotease Rip2 (rip2) (Mycobacterium tuberculosis (strain ATCC 35801 / TMC 107 / Erdman)).